We begin with the raw amino-acid sequence, 282 residues long: Putative phosphatase in upp 3'region (282 aa).

Catalysis depends on Asp-17, which acts as the Nucleophile. Asp-17 provides a ligand contact to Mg(2+). Position 18 (Leu-18) interacts with phosphate. Asp-19 is a binding site for Mg(2+). Phosphate-binding positions include 53 to 54 (TG) and Lys-211. Residues Asp-234 and Ser-235 each contribute to the Mg(2+) site. Asn-237 contacts phosphate.

Belongs to the HAD-like hydrolase superfamily. Cof family. Requires Mg(2+) as cofactor.

The sequence is that of Putative phosphatase in upp 3'region from Metamycoplasma hominis (Mycoplasma hominis).